The chain runs to 113 residues: Hydrogenase maturation factor HypA (113 aa).

Histidine 2 is a binding site for Ni(2+). Cysteine 73, cysteine 76, cysteine 89, and cysteine 92 together coordinate Zn(2+).

This sequence belongs to the HypA/HybF family.

Involved in the maturation of [NiFe] hydrogenases. Required for nickel insertion into the metal center of the hydrogenase. This Albidiferax ferrireducens (strain ATCC BAA-621 / DSM 15236 / T118) (Rhodoferax ferrireducens) protein is Hydrogenase maturation factor HypA.